Here is a 198-residue protein sequence, read N- to C-terminus: Secreted RxLR effector protein PITG_22926 (198 aa).

The N-terminal stretch at 1–20 (MLRSFLLIVATVSLFGQCKP) is a signal peptide. The RxLR-dEER signature appears at 43-52 (RFLRTNDEER).

This sequence belongs to the RxLR effector family. In terms of assembly, interacts with host MAP3Kbeta2 in the nucleoplasm.

The protein localises to the secreted. It is found in the host nucleus. Its subcellular location is the host nucleolus. Secreted effector that promotes P.infestans colonization of plant host. Specifically suppresses Avr4/Cf4- and AvrPto/Pto-triggered cell death. Targets the potato MAP3Kbeta2 kinase, a positive regulator of cell death associated with plant immunity, and perturbs signaling pathways triggered by MAP3Kbeta2. This chain is Secreted RxLR effector protein PITG_22926, found in Phytophthora infestans (strain T30-4) (Potato late blight agent).